A 125-amino-acid polypeptide reads, in one-letter code: Protein 5 (125 aa).

In Hordeum vulgare (Barley), this protein is Protein 5 (5).